A 332-amino-acid polypeptide reads, in one-letter code: Ferrochelatase (332 aa).

Residues His201 and Glu283 each coordinate Fe cation.

Belongs to the ferrochelatase family.

It is found in the cytoplasm. The catalysed reaction is heme b + 2 H(+) = protoporphyrin IX + Fe(2+). Its pathway is porphyrin-containing compound metabolism; protoheme biosynthesis; protoheme from protoporphyrin-IX: step 1/1. In terms of biological role, catalyzes the ferrous insertion into protoporphyrin IX. The polypeptide is Ferrochelatase (Francisella tularensis subsp. holarctica (strain FTNF002-00 / FTA)).